The chain runs to 116 residues: MASYKKERLENDIIRLINRTVIHEIYNETVKTGHVTHVKLSDDLLHVTVYLDCYNREQIDRVVGAFNQAKGVFSRVLAHNLYLAKAVQIHFVKDKAIDNAMRIESIINSLKKSKPN.

Belongs to the RbfA family. Monomer. Binds 30S ribosomal subunits, but not 50S ribosomal subunits or 70S ribosomes.

It is found in the cytoplasm. Functionally, one of several proteins that assist in the late maturation steps of the functional core of the 30S ribosomal subunit. Associates with free 30S ribosomal subunits (but not with 30S subunits that are part of 70S ribosomes or polysomes). Required for efficient processing of 16S rRNA. May interact with the 5'-terminal helix region of 16S rRNA. This chain is Ribosome-binding factor A, found in Mycoplasma pneumoniae (strain ATCC 29342 / M129 / Subtype 1) (Mycoplasmoides pneumoniae).